Here is a 465-residue protein sequence, read N- to C-terminus: Fumarate hydratase class II (465 aa).

Residues 98-100, Arg-126, 129-132, 139-141, and Thr-187 contribute to the substrate site; these read SGT, HPND, and SSN. His-188 acts as the Proton donor/acceptor in catalysis. The active site involves Ser-318. Substrate contacts are provided by residues Ser-319 and 324–326; that span reads KVN.

This sequence belongs to the class-II fumarase/aspartase family. Fumarase subfamily. In terms of assembly, homotetramer.

Its subcellular location is the cytoplasm. The catalysed reaction is (S)-malate = fumarate + H2O. It functions in the pathway carbohydrate metabolism; tricarboxylic acid cycle; (S)-malate from fumarate: step 1/1. Involved in the TCA cycle. Catalyzes the stereospecific interconversion of fumarate to L-malate. The sequence is that of Fumarate hydratase class II from Yersinia pestis.